Here is a 101-residue protein sequence, read N- to C-terminus: Phosphoribosyl-AMP cyclohydrolase (101 aa).

Residue D71 participates in Mg(2+) binding. Position 72 (C72) interacts with Zn(2+). Mg(2+)-binding residues include D73 and D75. The Zn(2+) site is built by C88 and C95.

This sequence belongs to the PRA-CH family. In terms of assembly, homodimer. Mg(2+) is required as a cofactor. Requires Zn(2+) as cofactor.

Its subcellular location is the cytoplasm. The catalysed reaction is 1-(5-phospho-beta-D-ribosyl)-5'-AMP + H2O = 1-(5-phospho-beta-D-ribosyl)-5-[(5-phospho-beta-D-ribosylamino)methylideneamino]imidazole-4-carboxamide. It participates in amino-acid biosynthesis; L-histidine biosynthesis; L-histidine from 5-phospho-alpha-D-ribose 1-diphosphate: step 3/9. Catalyzes the hydrolysis of the adenine ring of phosphoribosyl-AMP. In Bacillus cereus (strain ATCC 14579 / DSM 31 / CCUG 7414 / JCM 2152 / NBRC 15305 / NCIMB 9373 / NCTC 2599 / NRRL B-3711), this protein is Phosphoribosyl-AMP cyclohydrolase.